We begin with the raw amino-acid sequence, 496 residues long: Maturase K (496 aa).

This sequence belongs to the intron maturase 2 family. MatK subfamily.

Its subcellular location is the plastid. It is found in the chloroplast. Its function is as follows. Usually encoded in the trnK tRNA gene intron. Probably assists in splicing its own and other chloroplast group II introns. The chain is Maturase K from Paeonia lactiflora (Chinese peony).